The chain runs to 311 residues: 4-hydroxy-3-methylbut-2-enyl diphosphate reductase (311 aa).

Cys12 is a binding site for [4Fe-4S] cluster. His41 and His74 together coordinate (2E)-4-hydroxy-3-methylbut-2-enyl diphosphate. His41 and His74 together coordinate dimethylallyl diphosphate. Residues His41 and His74 each coordinate isopentenyl diphosphate. Cys96 lines the [4Fe-4S] cluster pocket. His124 lines the (2E)-4-hydroxy-3-methylbut-2-enyl diphosphate pocket. His124 is a binding site for dimethylallyl diphosphate. Isopentenyl diphosphate is bound at residue His124. The active-site Proton donor is Glu126. Thr168 contributes to the (2E)-4-hydroxy-3-methylbut-2-enyl diphosphate binding site. Residue Cys198 coordinates [4Fe-4S] cluster. (2E)-4-hydroxy-3-methylbut-2-enyl diphosphate contacts are provided by Ser226, Ser227, Asn228, and Ser270. Dimethylallyl diphosphate-binding residues include Ser226, Ser227, Asn228, and Ser270. Isopentenyl diphosphate-binding residues include Ser226, Ser227, Asn228, and Ser270.

Belongs to the IspH family. It depends on [4Fe-4S] cluster as a cofactor.

It carries out the reaction isopentenyl diphosphate + 2 oxidized [2Fe-2S]-[ferredoxin] + H2O = (2E)-4-hydroxy-3-methylbut-2-enyl diphosphate + 2 reduced [2Fe-2S]-[ferredoxin] + 2 H(+). The enzyme catalyses dimethylallyl diphosphate + 2 oxidized [2Fe-2S]-[ferredoxin] + H2O = (2E)-4-hydroxy-3-methylbut-2-enyl diphosphate + 2 reduced [2Fe-2S]-[ferredoxin] + 2 H(+). It functions in the pathway isoprenoid biosynthesis; dimethylallyl diphosphate biosynthesis; dimethylallyl diphosphate from (2E)-4-hydroxy-3-methylbutenyl diphosphate: step 1/1. It participates in isoprenoid biosynthesis; isopentenyl diphosphate biosynthesis via DXP pathway; isopentenyl diphosphate from 1-deoxy-D-xylulose 5-phosphate: step 6/6. In terms of biological role, catalyzes the conversion of 1-hydroxy-2-methyl-2-(E)-butenyl 4-diphosphate (HMBPP) into a mixture of isopentenyl diphosphate (IPP) and dimethylallyl diphosphate (DMAPP). Acts in the terminal step of the DOXP/MEP pathway for isoprenoid precursor biosynthesis. This is 4-hydroxy-3-methylbut-2-enyl diphosphate reductase from Alcanivorax borkumensis (strain ATCC 700651 / DSM 11573 / NCIMB 13689 / SK2).